The primary structure comprises 421 residues: Tol-Pal system protein TolB (421 aa).

Positions 1–16 (MRILVFLWLGLSSLFA) are cleaved as a signal peptide.

Belongs to the TolB family. The Tol-Pal system is composed of five core proteins: the inner membrane proteins TolA, TolQ and TolR, the periplasmic protein TolB and the outer membrane protein Pal. They form a network linking the inner and outer membranes and the peptidoglycan layer.

The protein resides in the periplasm. In terms of biological role, part of the Tol-Pal system, which plays a role in outer membrane invagination during cell division and is important for maintaining outer membrane integrity. The protein is Tol-Pal system protein TolB of Wolinella succinogenes (strain ATCC 29543 / DSM 1740 / CCUG 13145 / JCM 31913 / LMG 7466 / NCTC 11488 / FDC 602W) (Vibrio succinogenes).